The sequence spans 447 residues: Na(+)-translocating NADH-quinone reductase subunit A (447 aa).

This sequence belongs to the NqrA family. Composed of six subunits; NqrA, NqrB, NqrC, NqrD, NqrE and NqrF.

It catalyses the reaction a ubiquinone + n Na(+)(in) + NADH + H(+) = a ubiquinol + n Na(+)(out) + NAD(+). In terms of biological role, NQR complex catalyzes the reduction of ubiquinone-1 to ubiquinol by two successive reactions, coupled with the transport of Na(+) ions from the cytoplasm to the periplasm. NqrA to NqrE are probably involved in the second step, the conversion of ubisemiquinone to ubiquinol. The sequence is that of Na(+)-translocating NADH-quinone reductase subunit A from Neisseria gonorrhoeae (strain ATCC 700825 / FA 1090).